Consider the following 226-residue polypeptide: Putative pyridoxamine 5'-phosphate oxidase (226 aa).

Position 16–19 (16–19 (LNSH)) interacts with pyridoxal 5'-phosphate. 72–75 (RMVL) provides a ligand contact to FMN. Lys-77 is a binding site for pyridoxal 5'-phosphate. Residues 87–88 (YT), 93–94 (RK), and Gln-116 contribute to the FMN site. Pyridoxal 5'-phosphate-binding residues include Tyr-134, Arg-138, and Ser-142. Residues 151-152 (QS) and Trp-199 each bind FMN. 205–207 (RLH) serves as a coordination point for pyridoxal 5'-phosphate. Arg-209 lines the FMN pocket.

This sequence belongs to the pyridoxamine 5'-phosphate oxidase family. In terms of assembly, homodimer. FMN is required as a cofactor.

It carries out the reaction pyridoxamine 5'-phosphate + O2 + H2O = pyridoxal 5'-phosphate + H2O2 + NH4(+). The enzyme catalyses pyridoxine 5'-phosphate + O2 = pyridoxal 5'-phosphate + H2O2. It participates in cofactor metabolism; pyridoxal 5'-phosphate salvage; pyridoxal 5'-phosphate from pyridoxamine 5'-phosphate: step 1/1. It functions in the pathway cofactor metabolism; pyridoxal 5'-phosphate salvage; pyridoxal 5'-phosphate from pyridoxine 5'-phosphate: step 1/1. Its function is as follows. Catalyzes the oxidation of either pyridoxine 5'-phosphate (PNP) or pyridoxamine 5'-phosphate (PMP) into pyridoxal 5'-phosphate (PLP). The chain is Putative pyridoxamine 5'-phosphate oxidase from Caenorhabditis elegans.